The primary structure comprises 119 residues: Large ribosomal subunit protein bL19 (119 aa).

Belongs to the bacterial ribosomal protein bL19 family.

Functionally, this protein is located at the 30S-50S ribosomal subunit interface and may play a role in the structure and function of the aminoacyl-tRNA binding site. This is Large ribosomal subunit protein bL19 from Saccharopolyspora erythraea (strain ATCC 11635 / DSM 40517 / JCM 4748 / NBRC 13426 / NCIMB 8594 / NRRL 2338).